Consider the following 187-residue polypeptide: 1,6-anhydro-N-acetylmuramyl-L-alanine amidase AmpD (187 aa).

An N-acetylmuramoyl-L-alanine amidase domain is found at 30 to 167 (LLVVHNISLP…APERKTDPGP (138 aa)). A Zn(2+)-binding site is contributed by histidine 34. Glutamate 116 serves as the catalytic Proton acceptor. Zn(2+)-binding residues include histidine 154 and aspartate 164.

The protein belongs to the N-acetylmuramoyl-L-alanine amidase 2 family. The cofactor is Zn(2+).

The protein localises to the cytoplasm. The catalysed reaction is Hydrolyzes the link between N-acetylmuramoyl residues and L-amino acid residues in certain cell-wall glycopeptides.. Its activity is regulated as follows. Amidase activity is inhibited by metal chelators such as EDTA, dipicolinic acid or 1,10-phenanthroline. Its function is as follows. Involved in cell wall peptidoglycan recycling. Specifically cleaves the amide bond between the lactyl group of N-acetylmuramic acid and the alpha-amino group of the L-alanine in degradation products containing an anhydro N-acetylmuramyl moiety. Is also involved in beta-lactamase induction. The chain is 1,6-anhydro-N-acetylmuramyl-L-alanine amidase AmpD from Citrobacter freundii.